We begin with the raw amino-acid sequence, 265 residues long: Tryptophan synthase alpha chain (265 aa).

Active-site proton acceptor residues include Glu-48 and Asp-59.

This sequence belongs to the TrpA family. As to quaternary structure, tetramer of two alpha and two beta chains.

It catalyses the reaction (1S,2R)-1-C-(indol-3-yl)glycerol 3-phosphate + L-serine = D-glyceraldehyde 3-phosphate + L-tryptophan + H2O. It participates in amino-acid biosynthesis; L-tryptophan biosynthesis; L-tryptophan from chorismate: step 5/5. Functionally, the alpha subunit is responsible for the aldol cleavage of indoleglycerol phosphate to indole and glyceraldehyde 3-phosphate. The protein is Tryptophan synthase alpha chain of Vesicomyosocius okutanii subsp. Calyptogena okutanii (strain HA).